The following is a 79-amino-acid chain: Putative antitoxin VapB12 (79 aa).

This sequence belongs to the UPF0330 family.

Possibly the antitoxin component of a type II toxin-antitoxin (TA) system. Its cognate toxin is VapC12 (Potential). In Sulfurisphaera tokodaii (strain DSM 16993 / JCM 10545 / NBRC 100140 / 7) (Sulfolobus tokodaii), this protein is Putative antitoxin VapB12 (vapB12).